A 129-amino-acid polypeptide reads, in one-letter code: Small ribosomal subunit protein uS11 (129 aa).

It belongs to the universal ribosomal protein uS11 family. In terms of assembly, part of the 30S ribosomal subunit. Interacts with proteins S7 and S18. Binds to IF-3.

Located on the platform of the 30S subunit, it bridges several disparate RNA helices of the 16S rRNA. Forms part of the Shine-Dalgarno cleft in the 70S ribosome. The protein is Small ribosomal subunit protein uS11 of Vibrio atlanticus (strain LGP32) (Vibrio splendidus (strain Mel32)).